A 581-amino-acid chain; its full sequence is Zinc metalloproteinase nas-36 (581 aa).

The propeptide occupies 1–95 (MKEIAHSQAY…FRGANEKGKR (95 aa)). An N-linked (GlcNAc...) asparagine glycan is attached at N67. Residues 97 to 290 (AAEYDAKWFQ…IKLINEAYCK (194 aa)) form the Peptidase M12A domain. Intrachain disulfides connect C137/C289, C159/C178, C293/C313, C315/C324, and C336/C364. A Zn(2+)-binding site is contributed by H186. E187 is an active-site residue. Residues H190 and H196 each coordinate Zn(2+). Residues 285-325 (NEAYCKGDCKEKNECKNGGYLNPSNCQSCLCPSGFGGSKCE) enclose the EGF-like domain. In terms of domain architecture, CUB spans 336-449 (CGGTLKAIID…TGFKLKFRKT (114 aa)). N418 carries N-linked (GlcNAc...) asparagine glycosylation. A TSP type-1 domain is found at 474-523 (NDIWSEWGEWSQCSRSCGACGIKSRLRICKTAQCSGKVQQFLTCNLQACP). 3 disulfide bridges follow: C486/C517, C490/C522, and C502/C507.

Zn(2+) is required as a cofactor.

Its subcellular location is the secreted. Its activity is regulated as follows. Inhibited by 1,10-phenanthroline. Metalloprotease. Involved in molting, a process during larval stages in which a new cuticle is formed and the old cuticle is shed. The protein is Zinc metalloproteinase nas-36 of Brugia malayi (Filarial nematode worm).